We begin with the raw amino-acid sequence, 113 residues long: MDKKDLFDQITEVTRNTEDLLNKLHETQSAMVEIMEENAELQIENQHLRERLKQATAAENEGTKNTKYGLSKSLQNLEKLYASGYHVCNEFYGKHRQDEEECAFCLTVIYGDR.

Residues H86, C88, C102, and C105 each coordinate Zn(2+).

This sequence belongs to the YabA family. In terms of assembly, homotetramer. Interacts with both DnaA and DnaN, acting as a bridge between these two proteins. Requires Zn(2+) as cofactor.

Its subcellular location is the cytoplasm. The protein localises to the nucleoid. Involved in control of chromosome replication initiation. Inhibits the cooperative binding of DnaA to the oriC region, thus negatively regulating initiation of chromosome replication. Inhibits the ability of DnaA-ATP to form a helix on DNA; does not disassemble preformed DnaA-DNA helices. Decreases the residence time of DnaA on the chromosome at its binding sites (oriC, replication forks and promoter-binding sites). Tethers DnaA to the replication machinery via the DNA polymerase beta sliding clamp subunit (dnaN). Associates with oriC and other DnaA targets on the chromosome in a DnaA-dependent manner. The sequence is that of Replication initiation control protein YabA from Pediococcus pentosaceus (strain ATCC 25745 / CCUG 21536 / LMG 10740 / 183-1w).